The sequence spans 105 residues: Putative thioredoxin-5 (105 aa).

The Thioredoxin domain maps to 1 to 104 (MYKEPKNESE…VALENMVKKL (104 aa)). Residues C30 and C33 each act as nucleophile in the active site. C30 and C33 form a disulfide bridge.

This sequence belongs to the thioredoxin family.

Participates in various redox reactions through the reversible oxidation of its active center dithiol to a disulfide and catalyzes dithiol-disulfide exchange reactions. This chain is Putative thioredoxin-5 (trxE), found in Dictyostelium discoideum (Social amoeba).